The following is a 302-amino-acid chain: tRNA pseudouridine synthase B (302 aa).

The active-site Nucleophile is the aspartate 45.

The protein belongs to the pseudouridine synthase TruB family. Type 1 subfamily.

The catalysed reaction is uridine(55) in tRNA = pseudouridine(55) in tRNA. Its function is as follows. Responsible for synthesis of pseudouridine from uracil-55 in the psi GC loop of transfer RNAs. The polypeptide is tRNA pseudouridine synthase B (Francisella philomiragia subsp. philomiragia (strain ATCC 25017 / CCUG 19701 / FSC 153 / O#319-036)).